Reading from the N-terminus, the 291-residue chain is Fructose-1,6-bisphosphatase class 1 1 (291 aa).

Positions 78, 95, 97, and 98 each coordinate Mg(2+). Substrate is bound by residues 98–101, Tyr203, and Lys233; that span reads DGSS. Glu239 contacts Mg(2+).

Belongs to the FBPase class 1 family. In terms of assembly, homotetramer. Mg(2+) serves as cofactor.

The protein localises to the cytoplasm. The catalysed reaction is beta-D-fructose 1,6-bisphosphate + H2O = beta-D-fructose 6-phosphate + phosphate. Its pathway is carbohydrate biosynthesis; gluconeogenesis. In Haloarcula marismortui (strain ATCC 43049 / DSM 3752 / JCM 8966 / VKM B-1809) (Halobacterium marismortui), this protein is Fructose-1,6-bisphosphatase class 1 1.